A 200-amino-acid chain; its full sequence is 3-isopropylmalate dehydratase small subunit (200 aa).

It belongs to the LeuD family. LeuD type 1 subfamily. As to quaternary structure, heterodimer of LeuC and LeuD.

The catalysed reaction is (2R,3S)-3-isopropylmalate = (2S)-2-isopropylmalate. It functions in the pathway amino-acid biosynthesis; L-leucine biosynthesis; L-leucine from 3-methyl-2-oxobutanoate: step 2/4. Its function is as follows. Catalyzes the isomerization between 2-isopropylmalate and 3-isopropylmalate, via the formation of 2-isopropylmaleate. This Aliivibrio fischeri (strain MJ11) (Vibrio fischeri) protein is 3-isopropylmalate dehydratase small subunit.